Reading from the N-terminus, the 295-residue chain is Sulfotransferase 1A1 (295 aa).

48-53 is a binding site for 3'-phosphoadenylyl sulfate; that stretch reads KSGTTW. Residue 106 to 108 participates in substrate binding; that stretch reads KTH. Catalysis depends on histidine 108, which acts as the Proton acceptor. 3'-phosphoadenylyl sulfate-binding positions include arginine 130, serine 138, tyrosine 193, 227–232, and 255–259; these read TSFKEM and FMRKG. Serine 138 bears the Phosphoserine mark.

The protein belongs to the sulfotransferase 1 family. Homodimer. As to expression, distal lung parenchyma.

The protein localises to the cytoplasm. The enzyme catalyses a phenol + 3'-phosphoadenylyl sulfate = an aryl sulfate + adenosine 3',5'-bisphosphate + H(+). It catalyses the reaction 17beta-estradiol + 3'-phosphoadenylyl sulfate = 17beta-estradiol 3-sulfate + adenosine 3',5'-bisphosphate + H(+). The catalysed reaction is 4-ethylphenol + 3'-phosphoadenylyl sulfate = 4-ethylphenyl sulfate + adenosine 3',5'-bisphosphate + H(+). It carries out the reaction 4-nitrophenol + 3'-phosphoadenylyl sulfate = 4-nitrophenyl sulfate + adenosine 3',5'-bisphosphate. The enzyme catalyses dopamine + 3'-phosphoadenylyl sulfate = dopamine 3-O-sulfate + adenosine 3',5'-bisphosphate + H(+). It catalyses the reaction dopamine + 3'-phosphoadenylyl sulfate = dopamine 4-O-sulfate + adenosine 3',5'-bisphosphate + H(+). The catalysed reaction is 3,3',5-triiodo-L-thyronine + 3'-phosphoadenylyl sulfate = 3,3',5-triiodo-L-thyronine sulfate + adenosine 3',5'-bisphosphate + H(+). It carries out the reaction 3,3',5'-triiodo-L-thyronine + 3'-phosphoadenylyl sulfate = 3,3',5'-triiodo-L-thyronine sulfate + adenosine 3',5'-bisphosphate + H(+). The enzyme catalyses 3,3'-diiodo-L-thyronine + 3'-phosphoadenylyl sulfate = 3,3'-diiodo-L-thyronine sulfate + adenosine 3',5'-bisphosphate + H(+). It catalyses the reaction L-thyroxine + 3'-phosphoadenylyl sulfate = L-thyroxine sulfate + adenosine 3',5'-bisphosphate + H(+). Sulfotransferase that utilizes 3'-phospho-5'-adenylyl sulfate (PAPS) as sulfonate donor to catalyze the sulfate conjugation of a wide variety of acceptor molecules bearing a hydroxyl or an amine group. Sulfonation increases the water solubility of most compounds, and therefore their renal excretion, but it can also result in bioactivation to form active metabolites. Displays broad substrate specificity for small phenolic compounds. Plays an important role in the sulfonation of endogenous molecules such as steroid hormones. Mediates also the metabolic activation of carcinogenic N-hydroxyarylamines leading to highly reactive intermediates capable of forming DNA adducts, potentially resulting in mutagenesis. May play a role in gut microbiota-host metabolic interaction. O-sulfonates 4-ethylphenol (4-EP), a dietary tyrosine-derived metabolite produced by gut bacteria. The product 4-EPS crosses the blood-brain barrier and may negatively regulate oligodendrocyte maturation and myelination, affecting the functional connectivity of different brain regions associated with the limbic system. Catalyzes the sulfate conjugation of dopamine. Catalyzes the sulfation of T4 (L-thyroxine/3,5,3',5'-tetraiodothyronine), T3 (3,5,3'-triiodothyronine), rT3 (3,3',5'-triiodothyronine) and 3,3'-T2 (3,3'-diiodothyronine), with a substrate preference of 3,3'-T2 &gt; rT3 &gt; T3 &gt; T4. This chain is Sulfotransferase 1A1 (SULT1A1), found in Bos taurus (Bovine).